We begin with the raw amino-acid sequence, 318 residues long: Myoblast determination protein 1 (318 aa).

Residue M1 forms a Peptide (Met-Gly) (interchain with G-Cter in ubiquitin) linkage. K104 is modified (N6-methyllysine; by EHMT2). The region spanning 109–160 (DRRKAATMRERRRLSKVNEAFETLKRCTSSNPNQRLPKVEILRNAIRYIEGL) is the bHLH domain. 2 disordered regions span residues 175–225 (AAFY…QNGY) and 265–318 (APAL…YQVL). Over residues 196–206 (SDASSPRSNCS) the composition is skewed to polar residues. The segment covering 265–274 (APALLLADAP) has biased composition (low complexity). Composition is skewed to polar residues over residues 287–298 (LSDTEQGTQTPS) and 307–318 (AGSNPNAIYQVL).

Interacts with SUV39H1. Efficient DNA binding requires dimerization with another bHLH protein. Seems to form active heterodimers with ITF-2. Interacts with DDX5. Interacts with CHD2. Interacts with TSC22D3 isoform 1 and isoform 4. Interacts with SETD3. Interacts with P-TEFB complex; promotes the transcriptional activity of MYOD1 through its CDK9-mediated phosphorylation. Interacts with CSRP3. Interacts with NUPR1. Post-translationally, acetylated by a complex containing EP300 and PCAF. The acetylation is essential to activate target genes. Conversely, its deacetylation by SIRT1 inhibits its function. In terms of processing, ubiquitinated on the N-terminus; which is required for proteasomal degradation. Phosphorylated by CDK9. This phosphorylation promotes its function in muscle differentiation. Post-translationally, methylation at Lys-104 by EHMT2/G9a inhibits myogenic activity.

It is found in the nucleus. Its function is as follows. Acts as a transcriptional activator that promotes transcription of muscle-specific target genes and plays a role in muscle differentiation. Together with MYF5 and MYOG, co-occupies muscle-specific gene promoter core region during myogenesis. Induces fibroblasts to differentiate into myoblasts. Interacts with and is inhibited by the twist protein. This interaction probably involves the basic domains of both proteins. This is Myoblast determination protein 1 (Myod1) from Mus musculus (Mouse).